The sequence spans 398 residues: Glycosyltransferase GlyF (398 aa).

Positions 1–259 (MRKSIVLAAD…SEIAFQRSDL (259 aa)) are GT8 domain. Residues 8-13 (AADNAY) and 101-102 (DS) each bind UDP. Aspartate 101, aspartate 103, and histidine 221 together coordinate Mn(2+). Position 221–227 (221–227 (HYASHDK)) interacts with UDP.

This sequence in the N-terminal section; belongs to the glycosyltransferase 8 family.

Functionally, may be involved in the polymorphic O-glycosylation of the serine-rich repeat protein PsrP. Has hydrolytic activity against UDP-galactose and to a lesser extent against UDP-glucose; no glycosyltransferase activity has been seen with tested substrates. The sequence is that of Glycosyltransferase GlyF from Streptococcus pneumoniae serotype 4 (strain ATCC BAA-334 / TIGR4).